The following is a 368-amino-acid chain: Zinc finger protein 24 (368 aa).

Lys22 participates in a covalent cross-link: Glycyl lysine isopeptide (Lys-Gly) (interchain with G-Cter in SUMO2). Lys27 participates in a covalent cross-link: Glycyl lysine isopeptide (Lys-Gly) (interchain with G-Cter in SUMO1); alternate. Lys27 participates in a covalent cross-link: Glycyl lysine isopeptide (Lys-Gly) (interchain with G-Cter in SUMO2); alternate. The 83-residue stretch at 52–134 folds into the SCAN box domain; sequence RQRFRQFGYQ…TVLEDLESEL (83 aa). Residues Ser132 and Ser142 each carry the phosphoserine modification. Residues Lys147, Lys177, and Lys236 each participate in a glycyl lysine isopeptide (Lys-Gly) (interchain with G-Cter in SUMO2) cross-link. Residues 251-273 form a C2H2-type 1 zinc finger; sequence HICDECGKHFSQGSALILHQRIH. The tract at residues 251–301 is necessary and sufficient for nuclear localization; that stretch reads HICDECGKHFSQGSALILHQRIHSGEKPYGCVECGKAFSRSSILVQHQRVH. At Ser274 the chain carries Phosphoserine. Glycyl lysine isopeptide (Lys-Gly) (interchain with G-Cter in SUMO2) cross-links involve residues Lys277 and Lys286. 3 C2H2-type zinc fingers span residues 279–301, 307–329, and 335–357; these read YGCVECGKAFSRSSILVQHQRVH, YKCLECGKAFSQNSGLINHQRIH, and YECVQCGKSYSQSSNLFRHXXXH. At Ser292 the chain carries Phosphoserine. Tyr335 is subject to Phosphotyrosine. Residues Lys361 and Lys367 each participate in a glycyl lysine isopeptide (Lys-Gly) (interchain with G-Cter in SUMO2) cross-link.

The protein belongs to the krueppel C2H2-type zinc-finger protein family. Sumoylated.

It is found in the nucleus. Functionally, transcription factor required for myelination of differentiated oligodendrocytes. Required for the conversion of oligodendrocytes from the premyelinating to the myelinating state. In the developing central nervous system (CNS), involved in the maintenance in the progenitor stage by promoting the cell cycle. Specifically binds to the 5'-TCAT-3' DNA sequence. Has transcription repressor activity in vitro. In Pan paniscus (Pygmy chimpanzee), this protein is Zinc finger protein 24 (ZNF24).